The primary structure comprises 710 residues: Adenylosuccinate synthetase (710 aa).

2 disordered regions span residues 1–57 (MPVR…NHAK) and 82–112 (MDDEPSRGLQKPPSRARHAADANNNSASAQC). A compositionally biased stretch (low complexity) spans 11-25 (NNSSSGVSNALSSSS). Polar residues predominate over residues 32 to 43 (SPSSRENSTPLS). GTP contacts are provided by residues 180-186 (GDEGKGK) and 210-212 (GHT). D181 serves as the catalytic Proton acceptor. The Mg(2+) site is built by D181 and G210. IMP is bound by residues 181–184 (DEGK), 208–211 (NAGH), T295, K309, Q421, T437, and K567. H211 acts as the Proton donor in catalysis. 563–569 (AVTKKPR) contacts substrate. GTP contacts are provided by residues R569 and 697-699 (GNG).

Belongs to the adenylosuccinate synthetase family. Homodimer. It depends on Mg(2+) as a cofactor.

The protein resides in the cytoplasm. The catalysed reaction is IMP + L-aspartate + GTP = N(6)-(1,2-dicarboxyethyl)-AMP + GDP + phosphate + 2 H(+). It participates in purine metabolism; AMP biosynthesis via de novo pathway; AMP from IMP: step 1/2. Its function is as follows. Plays an important role in the salvage pathway for purine nucleotide biosynthesis. Catalyzes the first committed step in the biosynthesis of AMP from IMP. This is Adenylosuccinate synthetase from Leishmania braziliensis.